A 1044-amino-acid polypeptide reads, in one-letter code: Isoleucine--tRNA ligase (1044 aa).

The short motif at P48–H58 is the 'HIGH' region element. The short motif at K594–S598 is the 'KMSKS' region element. K597 lines the ATP pocket.

This sequence belongs to the class-I aminoacyl-tRNA synthetase family. IleS type 2 subfamily. Monomer. The cofactor is Zn(2+).

The protein resides in the cytoplasm. The enzyme catalyses tRNA(Ile) + L-isoleucine + ATP = L-isoleucyl-tRNA(Ile) + AMP + diphosphate. Functionally, catalyzes the attachment of isoleucine to tRNA(Ile). As IleRS can inadvertently accommodate and process structurally similar amino acids such as valine, to avoid such errors it has two additional distinct tRNA(Ile)-dependent editing activities. One activity is designated as 'pretransfer' editing and involves the hydrolysis of activated Val-AMP. The other activity is designated 'posttransfer' editing and involves deacylation of mischarged Val-tRNA(Ile). The chain is Isoleucine--tRNA ligase from Borrelia recurrentis (strain A1).